Here is a 264-residue protein sequence, read N- to C-terminus: uncharacterized protein (264 aa).

Composition is skewed to polar residues over residues 1-18, 73-83, and 126-139; these read MFENLNTALTPKLQSSRS, SLGSVGTTEVN, and KTTQDMLISSQPVL. Disordered regions lie at residues 1 to 47 and 68 to 264; these read MFEN…WVGS and RKEP…LSFE. Residues 149 to 171 show a composition bias toward low complexity; that stretch reads SSGQPQVSSSAQPSPADASQPEA. A compositionally biased stretch (basic and acidic residues) spans 194–212; sequence LIHKDGQDDPKLKVTECRR. 4 positions are modified to phosphoserine: serine 214, serine 215, serine 241, and serine 250.

This is an uncharacterized protein from Bos taurus (Bovine).